The chain runs to 335 residues: Calcium-binding protein TgpCaBP (335 aa).

The chain crosses the membrane as a helical span at residues 30–50 (LPLCVFSLFLFSFAFSALSGA). EF-hand domains follow at residues 113-148 (MHQH…SLDQ), 153-188 (QHKK…GKDE), 190-225 (LMKI…GSLN), and 227-262 (VEKT…PHSH). Ca(2+) contacts are provided by aspartate 126, aspartate 128, aspartate 130, lysine 132, glutamate 137, aspartate 166, aspartate 168, aspartate 170, glutamate 177, aspartate 203, asparagine 205, aspartate 207, lysine 209, glutamate 214, aspartate 240, asparagine 242, aspartate 244, and glutamate 251. The Prevents secretion from ER motif lies at 332–335 (HDEL).

It localises to the endoplasmic reticulum membrane. It is found in the cytoplasm. The protein localises to the cytosol. Its function is as follows. Calcium-binding protein. Participates in the efflux of intracellular Ca(2+) and storage of Ca(2+) in the endoplasmic reticulum. Required for gliding, host cell invasion and egress. Required for microneme secretion. This is Calcium-binding protein TgpCaBP from Toxoplasma gondii.